A 321-amino-acid polypeptide reads, in one-letter code: Beta-ketoacyl-[acyl-carrier-protein] synthase III (321 aa).

Catalysis depends on residues Cys114 and His248. The ACP-binding stretch occupies residues 249 to 253 (QANKR). Asn278 is an active-site residue.

The protein belongs to the thiolase-like superfamily. FabH family. As to quaternary structure, homodimer.

It localises to the cytoplasm. The enzyme catalyses malonyl-[ACP] + acetyl-CoA + H(+) = 3-oxobutanoyl-[ACP] + CO2 + CoA. It participates in lipid metabolism; fatty acid biosynthesis. Its function is as follows. Catalyzes the condensation reaction of fatty acid synthesis by the addition to an acyl acceptor of two carbons from malonyl-ACP. Catalyzes the first condensation reaction which initiates fatty acid synthesis and may therefore play a role in governing the total rate of fatty acid production. Possesses both acetoacetyl-ACP synthase and acetyl transacylase activities. Its substrate specificity determines the biosynthesis of branched-chain and/or straight-chain of fatty acids. This chain is Beta-ketoacyl-[acyl-carrier-protein] synthase III, found in Sphingopyxis alaskensis (strain DSM 13593 / LMG 18877 / RB2256) (Sphingomonas alaskensis).